Consider the following 141-residue polypeptide: Large ribosomal subunit protein uL11 (141 aa).

Belongs to the universal ribosomal protein uL11 family. Part of the ribosomal stalk of the 50S ribosomal subunit. Interacts with L10 and the large rRNA to form the base of the stalk. L10 forms an elongated spine to which L12 dimers bind in a sequential fashion forming a multimeric L10(L12)X complex. In terms of processing, one or more lysine residues are methylated.

Functionally, forms part of the ribosomal stalk which helps the ribosome interact with GTP-bound translation factors. The sequence is that of Large ribosomal subunit protein uL11 from Prochlorococcus marinus subsp. pastoris (strain CCMP1986 / NIES-2087 / MED4).